The following is a 400-amino-acid chain: Large envelope protein (400 aa).

Methionine 1 bears the N-acetylmethionine mark. Disordered regions lie at residues 1-42 (MGGY…NNPD) and 84-118 (ILTT…SHPQ). A lipid anchor (N-myristoyl glycine; by host) is attached at glycine 2. Positions 2–119 (GGYSSKPRKG…PPLRDSHPQA (118 aa)) are pre-S1. The interval 2–174 (GGYSSKPRKG…FSRTGDPVPK (173 aa)) is pre-S. The Virion surface; in external conformation segment spans residues 2–181 (GGYSSKPRKG…VPKMENTTSG (180 aa)). The Intravirion; in internal conformation segment spans residues 2–253 (GGYSSKPRKG…PGYRWMCLRR (252 aa)). Residue tyrosine 4 is glycosylated (N-linked (GlcNAc...) asparagine). Residues 120–174 (MQWNSTTFHQALLDPRVRGLYFPAGGSSSGTANPVPTTASPISSIFSRTGDPVPK) form a pre-S2 region. A helical membrane pass occupies residues 182–202 (FLGPLLVLQAGFFLLTRILTI). The Intravirion; in external conformation portion of the chain corresponds to 203–253 (PQSLDSWWTSLNFLGGAPACPGQNSQSPTSNHSPTSCPPICPGYRWMCLRR). Residues 254–274 (FIIFLFILLLCLIFLLVLLDY) traverse the membrane as a helical segment. At 275-348 (QGMLPVCPLI…WASVRFSWLS (74 aa)) the chain is on the virion surface side. Asparagine 320 carries an N-linked (GlcNAc...) asparagine; by host glycan. Residues 349–369 (LLAPFVQWFVGLSPTVWLSVI) traverse the membrane as a helical segment. The Intravirion portion of the chain corresponds to 370 to 375 (WMMWYW). A helical membrane pass occupies residues 376–398 (GPSLYNILSPFLPLLPIFFCLWV). Topologically, residues 399-400 (YI) are virion surface.

Belongs to the orthohepadnavirus major surface antigen family. In its internal form (Li-HBsAg), interacts with the capsid protein and with the isoform S. Interacts with host chaperone CANX. As to quaternary structure, associates with host chaperone CANX through its pre-S2 N glycan; this association may be essential for isoform M proper secretion. In terms of assembly, interacts with isoform L. Interacts with the antigens of satellite virus HDV (HDVAgs); this interaction is required for encapsidation of HDV genomic RNA. In terms of processing, isoform M is N-terminally acetylated by host at a ratio of 90%, and N-glycosylated by host at the pre-S2 region. Myristoylated.

The protein localises to the virion membrane. The large envelope protein exists in two topological conformations, one which is termed 'external' or Le-HBsAg and the other 'internal' or Li-HBsAg. In its external conformation the protein attaches the virus to cell receptors and thereby initiating infection. This interaction determines the species specificity and liver tropism. This attachment induces virion internalization predominantly through caveolin-mediated endocytosis. The large envelope protein also assures fusion between virion membrane and endosomal membrane. In its internal conformation the protein plays a role in virion morphogenesis and mediates the contact with the nucleocapsid like a matrix protein. In terms of biological role, the middle envelope protein plays an important role in the budding of the virion. It is involved in the induction of budding in a nucleocapsid independent way. In this process the majority of envelope proteins bud to form subviral lipoprotein particles of 22 nm of diameter that do not contain a nucleocapsid. This Homo sapiens (Human) protein is Large envelope protein.